The following is a 185-amino-acid chain: Large ribosomal subunit protein uL5 (185 aa).

Belongs to the universal ribosomal protein uL5 family. In terms of assembly, part of the 50S ribosomal subunit; part of the 5S rRNA/L5/L18/L25 subcomplex. Contacts the 5S rRNA and the P site tRNA. Forms a bridge to the 30S subunit in the 70S ribosome.

This is one of the proteins that bind and probably mediate the attachment of the 5S RNA into the large ribosomal subunit, where it forms part of the central protuberance. In the 70S ribosome it contacts protein S13 of the 30S subunit (bridge B1b), connecting the 2 subunits; this bridge is implicated in subunit movement. Contacts the P site tRNA; the 5S rRNA and some of its associated proteins might help stabilize positioning of ribosome-bound tRNAs. The polypeptide is Large ribosomal subunit protein uL5 (Parabacteroides distasonis (strain ATCC 8503 / DSM 20701 / CIP 104284 / JCM 5825 / NCTC 11152)).